The following is a 78-amino-acid chain: MDDLFKKIQQLIAAKLEIDEDKVTLDSSFRQDLGADSLDTYELVYALEEDMGIKIPDEKANEFETVRDAYEFIKSQQK.

Residues 2-77 (DDLFKKIQQL…DAYEFIKSQQ (76 aa)) enclose the Carrier domain. Serine 37 carries the O-(pantetheine 4'-phosphoryl)serine modification.

Belongs to the acyl carrier protein (ACP) family. In terms of processing, 4'-phosphopantetheine is transferred from CoA to a specific serine of apo-ACP by AcpS. This modification is essential for activity because fatty acids are bound in thioester linkage to the sulfhydryl of the prosthetic group.

It localises to the cytoplasm. Its pathway is lipid metabolism; fatty acid biosynthesis. In terms of biological role, carrier of the growing fatty acid chain in fatty acid biosynthesis. The chain is Acyl carrier protein from Treponema denticola (strain ATCC 35405 / DSM 14222 / CIP 103919 / JCM 8153 / KCTC 15104).